The primary structure comprises 152 residues: MELTTRTIAARKHIALVSHDHCKKSLLEWVMQNRDLLSQHELYATGTTGNLVQKATGIDVHCLLSGPMGGDQEVGALISEKKIDILIFFWDPLNAVPHDPDVKALLRLATVWNIPVATNRSTADFLIDSALFSGEVTIAIPNYDRYLQQRLK.

An MGS-like domain is found at 1-152 (MELTTRTIAA…YDRYLQQRLK (152 aa)). Residues histidine 19, lysine 23, 45–48 (TGTT), and 65–66 (SG) contribute to the substrate site. Residue aspartate 71 is the Proton donor/acceptor of the active site. Histidine 98 lines the substrate pocket.

Belongs to the methylglyoxal synthase family.

It carries out the reaction dihydroxyacetone phosphate = methylglyoxal + phosphate. In terms of biological role, catalyzes the formation of methylglyoxal from dihydroxyacetone phosphate. This is Methylglyoxal synthase from Yersinia enterocolitica serotype O:8 / biotype 1B (strain NCTC 13174 / 8081).